A 95-amino-acid polypeptide reads, in one-letter code: uncharacterized protein (95 aa).

Residues 1 to 21 (MKVLSISLIFFALLLTGCSQV) form the signal peptide.

This is an uncharacterized protein from Archaeoglobus fulgidus (strain ATCC 49558 / DSM 4304 / JCM 9628 / NBRC 100126 / VC-16).